A 351-amino-acid chain; its full sequence is 3-dehydroquinate synthase (351 aa).

NAD(+) contacts are provided by residues 60–65, 94–98, 118–119, lysine 131, lysine 140, and 158–161; these read DGEEYK, GVISD, TT, and FLKT. Zn(2+) contacts are provided by glutamate 173, histidine 239, and histidine 256.

It belongs to the sugar phosphate cyclases superfamily. Dehydroquinate synthase family. It depends on Co(2+) as a cofactor. Zn(2+) is required as a cofactor. The cofactor is NAD(+).

It localises to the cytoplasm. It carries out the reaction 7-phospho-2-dehydro-3-deoxy-D-arabino-heptonate = 3-dehydroquinate + phosphate. It functions in the pathway metabolic intermediate biosynthesis; chorismate biosynthesis; chorismate from D-erythrose 4-phosphate and phosphoenolpyruvate: step 2/7. Functionally, catalyzes the conversion of 3-deoxy-D-arabino-heptulosonate 7-phosphate (DAHP) to dehydroquinate (DHQ). The sequence is that of 3-dehydroquinate synthase from Campylobacter jejuni subsp. doylei (strain ATCC BAA-1458 / RM4099 / 269.97).